The chain runs to 277 residues: Small ribosomal subunit protein uS3 (277 aa).

Residues 43–111 (IRKVMNKDLE…QVQLNIFEVK (69 aa)) form the KH type-2 domain. The tract at residues 216–277 (FEEQQAQQGN…EAAVEPETKE (62 aa)) is disordered. The span at 264–277 (EVSKEAAVEPETKE) shows a compositional bias: basic and acidic residues.

Belongs to the universal ribosomal protein uS3 family. As to quaternary structure, part of the 30S ribosomal subunit. Forms a tight complex with proteins S10 and S14.

Binds the lower part of the 30S subunit head. Binds mRNA in the 70S ribosome, positioning it for translation. The chain is Small ribosomal subunit protein uS3 from Bifidobacterium animalis subsp. lactis (strain AD011).